The following is a 207-amino-acid chain: Ribosomal RNA small subunit methyltransferase G (207 aa).

S-adenosyl-L-methionine is bound by residues Gly-74, Leu-79, 125–126 (VE), and Arg-140.

The protein belongs to the methyltransferase superfamily. RNA methyltransferase RsmG family.

The protein resides in the cytoplasm. It carries out the reaction guanosine(527) in 16S rRNA + S-adenosyl-L-methionine = N(7)-methylguanosine(527) in 16S rRNA + S-adenosyl-L-homocysteine. Functionally, specifically methylates the N7 position of guanine in position 527 of 16S rRNA. The polypeptide is Ribosomal RNA small subunit methyltransferase G (Shewanella pealeana (strain ATCC 700345 / ANG-SQ1)).